A 404-amino-acid polypeptide reads, in one-letter code: Glucose-1-phosphate adenylyltransferase 2 (404 aa).

Residues Tyr-97, Gly-162, 177–178, and Ser-195 each bind alpha-D-glucose 1-phosphate; that span reads EK.

It belongs to the bacterial/plant glucose-1-phosphate adenylyltransferase family. As to quaternary structure, homotetramer.

The catalysed reaction is alpha-D-glucose 1-phosphate + ATP + H(+) = ADP-alpha-D-glucose + diphosphate. It participates in glycan biosynthesis; glycogen biosynthesis. In terms of biological role, involved in the biosynthesis of ADP-glucose, a building block required for the elongation reactions to produce glycogen. Catalyzes the reaction between ATP and alpha-D-glucose 1-phosphate (G1P) to produce pyrophosphate and ADP-Glc. The sequence is that of Glucose-1-phosphate adenylyltransferase 2 from Vibrio parahaemolyticus serotype O3:K6 (strain RIMD 2210633).